A 288-amino-acid chain; its full sequence is Glucose-1-phosphate thymidylyltransferase (288 aa).

Residue Gly-8 participates in dTDP-alpha-D-glucose binding. Residues Gly-8, Gly-11, Thr-12, Arg-13, Lys-23, Gln-24, Gln-80, Gly-85, and Asp-108 each coordinate dTTP. Residues Lys-23, Gln-24, Gln-80, Gly-85, Asp-108, Asn-109, Gly-143, Glu-158, Lys-159, Val-169, and Asp-222 each coordinate dTDP-alpha-D-glucose. Asp-108 contacts Mg(2+). Asp-222 is a binding site for Mg(2+).

Belongs to the glucose-1-phosphate thymidylyltransferase family. Requires Mg(2+) as cofactor.

The enzyme catalyses dTTP + alpha-D-glucose 1-phosphate + H(+) = dTDP-alpha-D-glucose + diphosphate. It participates in carbohydrate biosynthesis; dTDP-L-rhamnose biosynthesis. Functionally, catalyzes the conversion of glucose-1-phosphate and dTTP to dTDP-glucose and pyrophosphate. Involved in the biosynthesis of the dTDP-L-rhamnose which is a component of the critical linker, D-N-acetylglucosamine-L-rhamnose disaccharide, which connects the galactan region of arabinogalactan to peptidoglycan via a phosphodiester linkage. This Mycolicibacterium smegmatis (strain ATCC 700084 / mc(2)155) (Mycobacterium smegmatis) protein is Glucose-1-phosphate thymidylyltransferase (rmlA).